A 163-amino-acid chain; its full sequence is Probable phosphotransferase enzyme IIB component M6_Spy0801 (163 aa).

The 163-residue stretch at 1–163 (MITQIRVDDR…TKVHLSQLVN (163 aa)) folds into the PTS EIIB type-4 domain. Histidine 13 (pros-phosphohistidine intermediate) is an active-site residue.

The protein resides in the cytoplasm. In terms of biological role, the phosphoenolpyruvate-dependent sugar phosphotransferase system (sugar PTS), a major carbohydrate active -transport system, catalyzes the phosphorylation of incoming sugar substrates concomitantly with their translocation across the cell membrane. The sequence is that of Probable phosphotransferase enzyme IIB component M6_Spy0801 from Streptococcus pyogenes serotype M6 (strain ATCC BAA-946 / MGAS10394).